The following is a 696-amino-acid chain: Neurogenic protein big brain (696 aa).

Residues 1-71 (MADESLHTVP…LEFWRSIISE (71 aa)) lie on the Cytoplasmic side of the membrane. The residue at position 46 (S46) is a Phosphoserine. Phosphothreonine is present on T47. A helical membrane pass occupies residues 72-93 (CLASFMYVFIVCGAAAGVGVGA). At 94 to 97 (SVSS) the chain is on the extracellular side. The chain crosses the membrane as a helical span at residues 98–118 (VLLATALASGLAMATLTQCFL). Residues 119–143 (HISGAHINPAVTLALCVVRSISPIR) lie on the Cytoplasmic side of the membrane. The short motif at 126-128 (NPA) is the NPA 1 element. The chain crosses the membrane as a helical span at residues 144–167 (AAMYITAQCGGGIAGAALLYGVTV). Residues 168–189 (PGYQGNLQAAISHSAALAAWER) lie on the Extracellular side of the membrane. A helical transmembrane segment spans residues 190-208 (FGVEFILTFLVVLCYFVST). Over 209–213 (DPMKK) the chain is Cytoplasmic. The chain crosses the membrane as a helical span at residues 214–234 (FMGNSAASIGCAYSACCFVSM). Residues 235 to 256 (PYLNPARSLGPSFVLNKWDSHW) lie on the Extracellular side of the membrane. The NPA 2 signature appears at 238 to 240 (NPA). A helical membrane pass occupies residues 257–273 (VYWFGPLVGGMASGLVY). Position 273 is a phosphotyrosine; by Src (Y273). Residues 274–696 (EYIFNSRNRN…HYGMLPLRPN (423 aa)) are Cytoplasmic-facing. S300 is modified (phosphoserine). The tract at residues 314–345 (NKYQQSQGTYPRGQSNGNGGGQAAGNGQHQAA) is disordered. Y367 is subject to Phosphotyrosine; by Abl. Y384 is modified (phosphotyrosine; by Src). Phosphoserine is present on S394. Disordered regions lie at residues 436 to 634 (MRTQ…KVSA) and 650 to 696 (TSQG…LRPN). Composition is skewed to low complexity over residues 439-451 (QQQQ…QQQQ) and 462-472 (QNQNVQNQMQQ). Phosphotyrosine; by Src is present on Y478. Positions 487–532 (QQQPIQQQQQQQQQQQLQQQQPNMGVQQQQMQPPPQMMSDPQQQPQ) are enriched in low complexity. A compositionally biased stretch (basic and acidic residues) spans 549 to 558 (GNHKYDRRDP). Position 576 is a phosphoserine (S576). The segment covering 576 to 587 (SDDSSYGSYHGS) has biased composition (low complexity). The span at 599–616 (EPSPPPPPMLMYAPPPQP) shows a compositional bias: pro residues. Y610 bears the Phosphotyrosine; by Abl mark. Positions 659–686 (QQQQQQQQQQQQQQQQQQQQMMMQQQQQ) are enriched in low complexity.

It belongs to the MIP/aquaporin (TC 1.A.8) family. Post-translationally, phosphorylated at its C-terminus. Detected in all tissues with neurogenic abilities, for example the neurogenic ectoderm.

The protein localises to the membrane. In terms of biological role, essential for proper differentiation of ectoderm. Acts synergistically with neurogenic locus proteins Notch and Delta during the separation of neural and epidermal cell lineages in response to the lateral inhibition signal. Voltage-insensitive monovalent cation channel. Ion transport is blocked by the presence of divalent cations. The polypeptide is Neurogenic protein big brain (bib) (Drosophila melanogaster (Fruit fly)).